The following is a 562-amino-acid chain: Glutamate--tRNA ligase (562 aa).

The short motif at P101–H111 is the 'HIGH' region element.

It belongs to the class-I aminoacyl-tRNA synthetase family. Glutamate--tRNA ligase type 2 subfamily.

Its subcellular location is the cytoplasm. It catalyses the reaction tRNA(Glu) + L-glutamate + ATP = L-glutamyl-tRNA(Glu) + AMP + diphosphate. Catalyzes the attachment of glutamate to tRNA(Glu) in a two-step reaction: glutamate is first activated by ATP to form Glu-AMP and then transferred to the acceptor end of tRNA(Glu). In Cenarchaeum symbiosum (strain A), this protein is Glutamate--tRNA ligase.